We begin with the raw amino-acid sequence, 219 residues long: uncharacterized protein (219 aa).

Positions Val70–Gln102 are disordered. Residues Gly73 to Glu101 are compositionally biased toward basic and acidic residues. A coiled-coil region spans residues Thr96 to Glu120. The next 3 helical transmembrane spans lie at Gly126–Leu146, Ile153–Leu173, and Thr192–Phe212.

It localises to the membrane. This is an uncharacterized protein from Acanthamoeba polyphaga mimivirus (APMV).